A 484-amino-acid chain; its full sequence is Solute carrier family 40 member 1 (484 aa).

11 helical membrane passes run 58–78, 94–114, 123–143, 189–209, 212–232, 279–299, 308–328, 346–366, 377–397, 413–433, and 442–462; these read LLTA…GPIV, WLLL…ALLV, GFPA…LAAL, VLSG…ALAA, LAAV…FPAL, VVLP…FGTL, GIPA…GIAA, LWSI…VWAG, LMGG…AVMQ, GVQN…GIIV, and LIVL…MHVY.

It belongs to the ferroportin (FP) (TC 2.A.100) family. SLC40A subfamily.

The protein localises to the membrane. May be involved in iron transport and iron homeostasis. The chain is Solute carrier family 40 member 1 from Oryza sativa subsp. japonica (Rice).